A 791-amino-acid chain; its full sequence is Primase D5 (791 aa).

Residue D174 is part of the active site. Residues S346 to Q471 are primase. Residues E479–N641 enclose the SF3 helicase domain. G505–S512 contacts ATP.

The protein belongs to the poxviridae D5 family. Interacts with A20.

Primase which may have roles in initiation of DNA replication or lagging-strand synthesis. This Fowlpox virus (strain NVSL) (FPV) protein is Primase D5.